Reading from the N-terminus, the 387-residue chain is Patatin group A-3 (387 aa).

A signal peptide spans 1-23; the sequence is MATTKSFLILIVMILATTSSTFA. A PNPLA domain is found at 32 to 230; the sequence is LSIDGGGVKG…TVADPALLSV (199 aa). A GXGXXG motif is present at residues 36 to 41; sequence GGGVKG. The short motif at 75–79 is the GXSXG element; the sequence is GTSTG. S77 acts as the Nucleophile in catalysis. N115 carries an N-linked (GlcNAc...) asparagine glycan. Catalysis depends on D216, which acts as the Proton acceptor. Positions 216 to 218 match the DGA/G motif; that stretch reads DGA. Residues 361–385 adopt a coiled-coil conformation; the sequence is ETYEEALKRFAKLLSDRKKLRANKA.

Belongs to the patatin family. Tuber and stolon.

The protein resides in the vacuole. In terms of biological role, probable lipolytic acyl hydrolase (LAH), an activity which is thought to be involved in the response of tubers to pathogens. The polypeptide is Patatin group A-3 (Solanum tuberosum (Potato)).